Reading from the N-terminus, the 82-residue chain is Small ribosomal subunit protein bS16 (82 aa).

This sequence belongs to the bacterial ribosomal protein bS16 family.

The sequence is that of Small ribosomal subunit protein bS16 from Enterobacter sp. (strain 638).